The chain runs to 628 residues: (+)-alpha pinene synthase 1, chloroplastic (628 aa).

The N-terminal 18 residues, 1–18, are a transit peptide targeting the chloroplast; the sequence is MALVSAVPLNSKLCLCRT. Asp-379, Asp-383, and Asp-531 together coordinate Mg(2+). The DDXXD motif signature appears at 379-383; it reads DDIYD.

It belongs to the terpene synthase family. Tpsd subfamily. Mg(2+) serves as cofactor. The cofactor is Mn(2+).

Its subcellular location is the plastid. The protein resides in the chloroplast. It carries out the reaction (2E)-geranyl diphosphate = (1R,5R)-alpha-pinene + diphosphate. Its pathway is terpene metabolism; oleoresin biosynthesis. The protein operates within secondary metabolite biosynthesis; terpenoid biosynthesis. Functionally, monoterpene synthase (TPS) involved in the biosynthesis of monoterpene natural products included in conifer oleoresin secretions and volatile emissions; these compounds contribute to biotic and abiotic stress defense against herbivores and pathogens. Catalyzes the conversion of (2E)-geranyl diphosphate (GPP) to (+)-alpha-pinene. The protein is (+)-alpha pinene synthase 1, chloroplastic of Pinus banksiana (Jack pine).